Here is a 445-residue protein sequence, read N- to C-terminus: Chromosomal replication initiator protein DnaA (445 aa).

Positions 1–73 (MSTHLTETWE…VNALKLLTSK (73 aa)) are domain I, interacts with DnaA modulators. A domain II region spans residues 73–106 (KKYNIDFIVTTEEKIEKNHNNEKSNIVVNDEMST). Residues 107–323 (MLNPKYTFDS…GALIRIVAFS (217 aa)) form a domain III, AAA+ region region. ATP is bound by residues G151, G153, K154, and T155. The interval 324–445 (SLTNKEISVD…KELNKRINQK (122 aa)) is domain IV, binds dsDNA.

This sequence belongs to the DnaA family. In terms of assembly, oligomerizes as a right-handed, spiral filament on DNA at oriC.

It localises to the cytoplasm. In terms of biological role, plays an essential role in the initiation and regulation of chromosomal replication. ATP-DnaA binds to the origin of replication (oriC) to initiate formation of the DNA replication initiation complex once per cell cycle. Binds the DnaA box (a 9 base pair repeat at the origin) and separates the double-stranded (ds)DNA. Forms a right-handed helical filament on oriC DNA; dsDNA binds to the exterior of the filament while single-stranded (ss)DNA is stabiized in the filament's interior. The ATP-DnaA-oriC complex binds and stabilizes one strand of the AT-rich DNA unwinding element (DUE), permitting loading of DNA polymerase. After initiation quickly degrades to an ADP-DnaA complex that is not apt for DNA replication. Binds acidic phospholipids. In Clostridium botulinum (strain Okra / Type B1), this protein is Chromosomal replication initiator protein DnaA.